We begin with the raw amino-acid sequence, 545 residues long: CTP synthase (545 aa).

Residues 1-266 (MTTKYIFVTG…DSYFTERFGL (266 aa)) are amidoligase domain. Ser14 provides a ligand contact to CTP. Position 14 (Ser14) interacts with UTP. ATP contacts are provided by residues 15-20 (SLGKGI) and Asp72. 2 residues coordinate Mg(2+): Asp72 and Glu140. CTP-binding positions include 147–149 (DIE), 187–192 (KTKPTQ), and Lys223. UTP contacts are provided by residues 187–192 (KTKPTQ) and Lys223. Residue 239–241 (KDV) coordinates ATP. The region spanning 291–542 (TIGMVGKYVS…VKAAGEYQKR (252 aa)) is the Glutamine amidotransferase type-1 domain. Gly352 serves as a coordination point for L-glutamine. The active-site Nucleophile; for glutamine hydrolysis is Cys379. L-glutamine-binding positions include 380-383 (LGMQ), Glu403, and Arg470. Catalysis depends on residues His515 and Glu517.

It belongs to the CTP synthase family. As to quaternary structure, homotetramer.

It catalyses the reaction UTP + L-glutamine + ATP + H2O = CTP + L-glutamate + ADP + phosphate + 2 H(+). The catalysed reaction is L-glutamine + H2O = L-glutamate + NH4(+). The enzyme catalyses UTP + NH4(+) + ATP = CTP + ADP + phosphate + 2 H(+). It functions in the pathway pyrimidine metabolism; CTP biosynthesis via de novo pathway; CTP from UDP: step 2/2. Its activity is regulated as follows. Allosterically activated by GTP, when glutamine is the substrate; GTP has no effect on the reaction when ammonia is the substrate. The allosteric effector GTP functions by stabilizing the protein conformation that binds the tetrahedral intermediate(s) formed during glutamine hydrolysis. Inhibited by the product CTP, via allosteric rather than competitive inhibition. Functionally, catalyzes the ATP-dependent amination of UTP to CTP with either L-glutamine or ammonia as the source of nitrogen. Regulates intracellular CTP levels through interactions with the four ribonucleotide triphosphates. This chain is CTP synthase, found in Aeromonas hydrophila subsp. hydrophila (strain ATCC 7966 / DSM 30187 / BCRC 13018 / CCUG 14551 / JCM 1027 / KCTC 2358 / NCIMB 9240 / NCTC 8049).